The primary structure comprises 430 residues: Adenylosuccinate synthetase (430 aa).

GTP-binding positions include 13 to 19 (GDEGKGK) and 41 to 43 (GHT). The Proton acceptor role is filled by Asp14. Residues Asp14 and Gly41 each coordinate Mg(2+). IMP contacts are provided by residues 14-17 (DEGK), 39-42 (NAGH), Thr130, Arg144, Gln225, Thr240, and Arg304. The active-site Proton donor is the His42. Residue 300–306 (ATTGRAR) participates in substrate binding. GTP is bound by residues Arg306, 332-334 (KLD), and 414-416 (STG).

This sequence belongs to the adenylosuccinate synthetase family. As to quaternary structure, homodimer. Mg(2+) is required as a cofactor.

The protein localises to the cytoplasm. It catalyses the reaction IMP + L-aspartate + GTP = N(6)-(1,2-dicarboxyethyl)-AMP + GDP + phosphate + 2 H(+). It participates in purine metabolism; AMP biosynthesis via de novo pathway; AMP from IMP: step 1/2. In terms of biological role, plays an important role in the de novo pathway of purine nucleotide biosynthesis. Catalyzes the first committed step in the biosynthesis of AMP from IMP. This Pseudomonas aeruginosa (strain LESB58) protein is Adenylosuccinate synthetase.